A 126-amino-acid chain; its full sequence is Large ribosomal subunit protein eL18 (126 aa).

The protein belongs to the eukaryotic ribosomal protein eL18 family.

The sequence is that of Large ribosomal subunit protein eL18 from Methanosarcina acetivorans (strain ATCC 35395 / DSM 2834 / JCM 12185 / C2A).